Here is a 313-residue protein sequence, read N- to C-terminus: Protein FixB (313 aa).

FAD is bound at residue 255–283 (LYLAVGISGQIQHMVGANASQTIFAINKD).

The protein belongs to the ETF alpha-subunit/FixB family. As to quaternary structure, heterodimer of FixA and FixB.

The protein operates within amine and polyamine metabolism; carnitine metabolism. Its function is as follows. Required for anaerobic carnitine reduction. May bring reductant to CaiA. The protein is Protein FixB of Escherichia coli O1:K1 / APEC.